The primary structure comprises 363 residues: LIM and cysteine-rich domains protein 1 (363 aa).

Ser16 bears the Phosphoserine mark. Residues 99-206 (MIMTNPIATG…GEVALPGQGG (108 aa)) form the PET domain. A disordered region spans residues 200–234 (ALPGQGGLPKEEGKQQEKPEGAETAPPTTNGSIGD). Residues 208-220 (PKEEGKQQEKPEG) are compositionally biased toward basic and acidic residues. 2 LIM zinc-binding domains span residues 239–304 (YVCE…SLRP) and 305–363 (RCSG…SKRS).

As to quaternary structure, interacts with beta-dystroglycan. Interacts with GATA1, GATA4 and GATA6.

It is found in the cytoplasm. Its subcellular location is the nucleus. In terms of biological role, transcriptional cofactor that restricts GATA6 function by inhibiting DNA-binding, resulting in repression of GATA6 transcriptional activation of downstream target genes. Represses GATA6-mediated trans activation of lung- and cardiac tissue-specific promoters. Inhibits DNA-binding by GATA4 and GATA1 to the cTNC promoter. Plays a critical role in the development of cardiac hypertrophy via activation of calcineurin/nuclear factor of activated T-cells signaling pathway. This chain is LIM and cysteine-rich domains protein 1 (LMCD1), found in Bos taurus (Bovine).